The chain runs to 409 residues: Fructose-1,6-bisphosphatase, chloroplastic (409 aa).

Residues 1 to 49 (MAAATTTTSRPLLLSRQQAAASSLQCRLPRRPGSSLFAGQGQASTPNVR) constitute a chloroplast transit peptide. Mg(2+) is bound by residues glutamate 131, glutamate 160, aspartate 181, leucine 183, and aspartate 184. 184–187 (DGSS) lines the substrate pocket. Cysteine 223 and cysteine 228 are disulfide-bonded. Residues asparagine 287, tyrosine 319, tyrosine 337, tyrosine 339, and lysine 349 each contribute to the substrate site. Glutamate 355 contributes to the Mg(2+) binding site.

Belongs to the FBPase class 1 family. In terms of assembly, homotetramer. The cofactor is Mg(2+). In terms of tissue distribution, in photosynthetically active tissues, and in the shoot and root apical meristems.

Its subcellular location is the plastid. The protein resides in the chloroplast. It carries out the reaction beta-D-fructose 1,6-bisphosphate + H2O = beta-D-fructose 6-phosphate + phosphate. Its pathway is carbohydrate biosynthesis; Calvin cycle. This chain is Fructose-1,6-bisphosphatase, chloroplastic (FBP), found in Triticum aestivum (Wheat).